The following is an 876-amino-acid chain: Phosphoenolpyruvate carboxylase (876 aa).

Catalysis depends on residues His-138 and Lys-543.

The protein belongs to the PEPCase type 1 family. Mg(2+) serves as cofactor.

It catalyses the reaction oxaloacetate + phosphate = phosphoenolpyruvate + hydrogencarbonate. Forms oxaloacetate, a four-carbon dicarboxylic acid source for the tricarboxylic acid cycle. This chain is Phosphoenolpyruvate carboxylase, found in Vibrio atlanticus (strain LGP32) (Vibrio splendidus (strain Mel32)).